The sequence spans 341 residues: UDP-3-O-acylglucosamine N-acyltransferase (341 aa).

His-239 functions as the Proton acceptor in the catalytic mechanism.

This sequence belongs to the transferase hexapeptide repeat family. LpxD subfamily. In terms of assembly, homotrimer.

It catalyses the reaction a UDP-3-O-[(3R)-3-hydroxyacyl]-alpha-D-glucosamine + a (3R)-hydroxyacyl-[ACP] = a UDP-2-N,3-O-bis[(3R)-3-hydroxyacyl]-alpha-D-glucosamine + holo-[ACP] + H(+). Its pathway is bacterial outer membrane biogenesis; LPS lipid A biosynthesis. Its function is as follows. Catalyzes the N-acylation of UDP-3-O-acylglucosamine using 3-hydroxyacyl-ACP as the acyl donor. Is involved in the biosynthesis of lipid A, a phosphorylated glycolipid that anchors the lipopolysaccharide to the outer membrane of the cell. The sequence is that of UDP-3-O-acylglucosamine N-acyltransferase from Shewanella oneidensis (strain ATCC 700550 / JCM 31522 / CIP 106686 / LMG 19005 / NCIMB 14063 / MR-1).